A 654-amino-acid chain; its full sequence is Coiled-coil domain-containing protein 30 (654 aa).

A disordered region spans residues 38 to 65 (TLESRRDPNSSLQKEFPQHQDEDQSRAA). Positions 53-62 (FPQHQDEDQS) are enriched in basic and acidic residues. Coiled-coil stretches lie at residues 97–244 (REER…LDNA) and 276–559 (KSQQ…QIIR). The segment at 614 to 654 (AAAIPKSPEPLSRSQDSESGYINVTSLKETHNTQGDQKPEL) is disordered. The segment covering 625–654 (SRSQDSESGYINVTSLKETHNTQGDQKPEL) has biased composition (polar residues).

Belongs to the prefoldin subunit beta family.

The chain is Coiled-coil domain-containing protein 30 (Ccdc30) from Mus musculus (Mouse).